The primary structure comprises 640 residues: Glutamyl-tRNA(Gln) amidotransferase subunit E (640 aa).

The protein belongs to the GatB/GatE family. GatE subfamily. As to quaternary structure, heterodimer of GatD and GatE.

The catalysed reaction is L-glutamyl-tRNA(Gln) + L-glutamine + ATP + H2O = L-glutaminyl-tRNA(Gln) + L-glutamate + ADP + phosphate + H(+). Functionally, allows the formation of correctly charged Gln-tRNA(Gln) through the transamidation of misacylated Glu-tRNA(Gln) in organisms which lack glutaminyl-tRNA synthetase. The reaction takes place in the presence of glutamine and ATP through an activated gamma-phospho-Glu-tRNA(Gln). The GatDE system is specific for glutamate and does not act on aspartate. This is Glutamyl-tRNA(Gln) amidotransferase subunit E from Methanopyrus kandleri (strain AV19 / DSM 6324 / JCM 9639 / NBRC 100938).